A 175-amino-acid chain; its full sequence is Shikimate kinase (175 aa).

12 to 19 contacts ATP; that stretch reads GGRASGKS.

The protein belongs to the shikimate kinase family.

The protein resides in the cytoplasm. The catalysed reaction is shikimate + ATP = 3-phosphoshikimate + ADP + H(+). It functions in the pathway metabolic intermediate biosynthesis; chorismate biosynthesis; chorismate from D-erythrose 4-phosphate and phosphoenolpyruvate: step 5/7. This Nitratidesulfovibrio vulgaris (strain ATCC 29579 / DSM 644 / CCUG 34227 / NCIMB 8303 / VKM B-1760 / Hildenborough) (Desulfovibrio vulgaris) protein is Shikimate kinase.